A 188-amino-acid chain; its full sequence is Meiotically up-regulated gene 94 protein (188 aa).

It is found in the cytoplasm. It localises to the nucleus. Its function is as follows. Has a role in meiosis. The polypeptide is Meiotically up-regulated gene 94 protein (mug94) (Schizosaccharomyces pombe (strain 972 / ATCC 24843) (Fission yeast)).